A 280-amino-acid chain; its full sequence is MLKNIIYSYITQLKNLLSKKLNVLCTFSAGQDSFFLLYCLIHIISNKNNKIKLQHNHHFLQSSNILSFWQCIKVASIFKIPLVINLLEINLANKDFMTENEARKWRYDSFLRNSLFQNEKPSIFIGHTGSDLLETFFWHFLRNSIIDYQLIKKKLLWNIPYYISNFSSVGYKNSSKVKIKLTNKKKKINCLINHNLMLNKAKKSFLKKDLTQLVLITRPLVNLHRQDIFLFRKNLKLPVITDKSNDNNYYYRNRIRNILFPIMRILFNKKTDKNLIKLFL.

28 to 33 (SAGQDS) serves as a coordination point for ATP.

The protein belongs to the tRNA(Ile)-lysidine synthase family.

The protein resides in the plastid. It catalyses the reaction cytidine(34) in tRNA(Ile2) + L-lysine + ATP = lysidine(34) in tRNA(Ile2) + AMP + diphosphate + H(+). Its function is as follows. Ligates lysine onto the cytidine present at position 34 of the AUA codon-specific tRNA(Ile) that contains the anticodon CAU, in an ATP-dependent manner. Cytidine is converted to lysidine, thus changing the amino acid specificity of the tRNA from methionine to isoleucine. The polypeptide is tRNA(Ile)-lysidine synthase, plastid (tilS) (Helicosporidium sp. subsp. Simulium jonesii (Green alga)).